Here is a 139-residue protein sequence, read N- to C-terminus: MNFKYIVAVSFLIASAYARSVQNDEQSLSQRDVLEEESLREIRGIGGVLLSAGKAALKGLAKVLAEKYANGKRTAEDHEVMKRLEAIMRDLDSLDYPEEASERETRGFNQDEIAKEKRILGPVLGLVGNALGGLIKKIG.

The first 18 residues, 1–18, serve as a signal peptide directing secretion; the sequence is MNFKYIVAVSFLIASAYA. The propeptide occupies 19–43; that stretch reads RSVQNDEQSLSQRDVLEEESLREIR. Asparagine amide is present on Asn-70. The propeptide occupies 74–118; that stretch reads TAEDHEVMKRLEAIMRDLDSLDYPEEASERETRGFNQDEIAKEKR. Ile-138 carries the post-translational modification Isoleucine amide.

Belongs to the bombinin family. As to expression, expressed by the skin glands.

The protein resides in the secreted. Its function is as follows. Maximin-4 shows antibacterial activity against both Gram-positive and Gram-negative bacteria. It also shows antimicrobial activity against the fungus C.albicans, but not against A.flavus nor P.uticale. It has little hemolytic activity. It does not possess a significant cytotoxicity against tumor cell lines. It does not possess a significant anti-HIV activity. Maximin-H3 shows antibacterial activity against both Gram-positive and Gram-negative bacteria. It also shows antimicrobial activity against the fungus C.albicans. Shows strong hemolytic activity. The chain is Maximins 4/H3 type 7 from Bombina maxima (Giant fire-bellied toad).